The primary structure comprises 109 residues: SFAGILSDADIDAALAACQAAESFKHKEFFAKVGLSAKTPDVIKKAFYVIDQDKSGFIEEDELKLFLQNFASSARALTDKETETFLKAGDSDGDGKIGIDEFADLVKEA.

Ser1 carries the post-translational modification N-acetylserine. 2 EF-hand domains span residues 38–73 (KTPD…FASS) and 77–109 (LTDK…VKEA). Residues Asp51, Asp53, Ser55, Phe57, Glu59, Glu62, Asp90, Asp92, Asp94, Lys96, and Glu101 each coordinate Ca(2+).

It belongs to the parvalbumin family.

In terms of biological role, in muscle, parvalbumin is thought to be involved in relaxation after contraction. It binds two calcium ions. The chain is Parvalbumin beta from Opsanus tau (Oyster toadfish).